A 595-amino-acid chain; its full sequence is Beta-(1--&gt;2)glucan export ATP-binding/permease protein NdvA (595 aa).

Residues 21–301 (SLLICSANVM…MSNFINLTIS (281 aa)) form the ABC transmembrane type-1 domain. 5 helical membrane-spanning segments follow: residues 22 to 42 (LLICSANVMLAIITIAEPILF), 55 to 75 (IIPTLTIWVCFGISHILAYVL), 129 to 149 (IWLDFMRQHLSTLVALFVLIP), 152 to 172 (FNMNWRLSIVLVVLAIIYVLI), and 248 to 268 (MASTISIVCVLLLGAFFVAKG). The 235-residue stretch at 335 to 569 (IQFHHVTYKF…GGRFYKLLKA (235 aa)) folds into the ABC transporter domain. 368 to 375 (GPTGAGKT) is an ATP binding site.

The protein belongs to the ABC transporter superfamily. Beta-(1--&gt;2)glucan exporter (TC 3.A.1.108.1) family. As to quaternary structure, homodimer.

It localises to the cell inner membrane. The enzyme catalyses [(1-&gt;2)-beta-D-glucosyl](n)(in) + ATP + H2O = [(1-&gt;2)-beta-D-glucosyl](n)(out) + ADP + phosphate + H(+). In terms of biological role, involved in beta-(1--&gt;2)glucan export. Transmembrane domains (TMD) form a pore in the inner membrane and the ATP-binding domain (NBD) is responsible for energy generation. The protein is Beta-(1--&gt;2)glucan export ATP-binding/permease protein NdvA of Bartonella henselae (strain ATCC 49882 / DSM 28221 / CCUG 30454 / Houston 1) (Rochalimaea henselae).